The primary structure comprises 132 residues: Small ribosomal subunit protein uS8 (132 aa).

This sequence belongs to the universal ribosomal protein uS8 family. In terms of assembly, part of the 30S ribosomal subunit. Contacts proteins S5 and S12.

Functionally, one of the primary rRNA binding proteins, it binds directly to 16S rRNA central domain where it helps coordinate assembly of the platform of the 30S subunit. The chain is Small ribosomal subunit protein uS8 from Desulforamulus reducens (strain ATCC BAA-1160 / DSM 100696 / MI-1) (Desulfotomaculum reducens).